Here is a 1218-residue protein sequence, read N- to C-terminus: NACHT, LRR and PYD domains-containing protein 1a allele 3 (1218 aa).

Residues 1-29 (MGESQSKQESNTRVAQHGSQQDVDPTFQT) are compositionally biased toward polar residues. Disordered stretches follow at residues 1–44 (MGES…QVEQ) and 71–91 (EMDH…DRSE). Residues 77–87 (RRHSHQSKKKL) are compositionally biased toward basic residues. Residues 175–484 (QLVIIEGAAG…EFFAAMSYIL (310 aa)) enclose the NACHT domain. 181 to 188 (GAAGIGKS) serves as a coordination point for ATP. LRR repeat units follow at residues 343-364 (KERN…LTLC), 673-693 (NLEE…RSLC), and 730-750 (RLAE…RQLC). Residues 799–815 (TMPTENTDGEESLTSSK) are compositionally biased toward polar residues. Residues 799–842 (TMPTENTDGEESLTSSKQQQQQSGDKHMEPLGTDDDFWGPSGPV) form a disordered region. Residues 835–968 (FWGPSGPVST…HFAVLENPSF (134 aa)) form a ZU5 region. Positions 835-1118 (FWGPSGPVST…LRPALPRMAS (284 aa)) constitute an FIIND domain. The tract at residues 969–1118 (SPMGVLLRMI…LRPALPRMAS (150 aa)) is UPA. The CARD domain maps to 1122–1211 (DAPALLHFVD…HLIMDLLEKS (90 aa)).

Belongs to the NLRP family. In terms of assembly, interacts (via LRR repeats) with BCL2 and BCL2L1 (via the loop between motifs BH4 and BH3). Interacts with NOD2; this interaction is enhanced in the presence of muramyl dipeptide (MDP) and increases IL1B release. Interacts with EIF2AK2/PKR; this interaction requires EIF2AK2 activity, is accompanied by EIF2AK2 autophosphorylation and promotes inflammasome assembly in response to danger-associated signals. Interacts with MEFV; this interaction targets Nlrp1a to degradation by autophagy, hence preventing excessive IL1B- and IL18-mediated inflammation. Interacts with DPP9; leading to inhibit activation of the inflammasome. DPP9 acts via formation of a ternary complex, composed of a DPP9 homodimer, one full-length NLRP1 protein, and one cleaved C-terminus of Nlrp1a (NACHT, LRR and PYD domains-containing protein 1a, C-terminus). Interacts with DPP8; leading to inhibit activation of the inflammasome, probably via formation of a ternary complex with DPP8. As to quaternary structure, interacts with the C-terminal part of Nlrp1a (NACHT, LRR and PYD domains-containing protein 1a, C-terminus) in absence of pathogens and other damage-associated signals. Interacts with the N-terminal part of Nlrp1a (NACHT, LRR and PYD domains-containing protein 1a, N-terminus) in absence of pathogens and other damage-associated signals. Homomultimer; forms the Nlrp1a inflammasome polymeric complex, a filament composed of homopolymers of this form in response to pathogens and other damage-associated signals. The Nlrp1a inflammasome polymeric complex directly recruits pro-caspase-1 (proCASP1) independently of PYCARD/ASC. Interacts (via CARD domain) with CASP1 (via CARD domain); leading to CASP1 activation. In terms of processing, autocatalytically cleaved. Autocatalytic cleavage in FIIND region occurs constitutively, prior to activation signals, and is required for inflammasome activity (IL1B release), possibly by facilitating CASP1 binding. Both N- and C-terminal parts remain associated non-covalently. Ubiquitinated in response to pathogen-associated signals, leading to its degradation by the proteasome and subsequent release of the cleaved C-terminal part of the protein (NACHT, LRR and PYD domains-containing protein 1a, C-terminus), which polymerizes and forms the Nlrp1a inflammasome.

The protein resides in the cytoplasm. The protein localises to the cytosol. It localises to the nucleus. It is found in the inflammasome. Its activity is regulated as follows. Activated by pathogens and other damage-associated signals: activation promotes ubiquitination and degradation of the N-terminal part, releasing the cleaved C-terminal part of the protein (NACHT, LRR and PYD domains-containing protein 1a, C-terminus), which polymerizes and forms the Nlrp1a inflammasome. Nlrp1a inflammasome is inhibited by DPP8 and DPP9, which sequester the C-terminal fragment of Nlrp1a (NACHT, LRR and PYD domains-containing protein 1a, C-terminus) in a ternary complex, thereby preventing Nlrp1a oligomerization and activation. Nlrp1a inflammasome is strongly activated by Val-boroPro (Talabostat, PT-100), an inhibitor of dipeptidyl peptidases DPP8 and DPP9. Val-boroPro relieves inhibition of DPP8 and/or DPP9 by promoting disruption of the ternary complex, releasing its C-terminal part from autoinhibition. Not activated by cleavage by B.anthracis lethal toxin (LT) endopeptidase. Functionally, acts as the sensor component of the Nlrp1a inflammasome, which mediates inflammasome activation in response to various pathogen-associated signals, leading to subsequent pyroptosis. Inflammasomes are supramolecular complexes that assemble in the cytosol in response to pathogens and other damage-associated signals and play critical roles in innate immunity and inflammation. Acts as a recognition receptor (PRR): recognizes specific pathogens and other damage-associated signals, such as Val-boroPro inhibitor, and mediates the formation of the inflammasome polymeric complex. In response to pathogen-associated signals, the N-terminal part of Nlrp1a is degraded by the proteasome, releasing the cleaved C-terminal part of the protein (NACHT, LRR and PYD domains-containing protein 1a, C-terminus), which polymerizes to initiate the formation of the inflammasome complex: the inflammasome directly recruits pro-caspase-1 (proCASP1) independently of PYCARD/ASC and promotes caspase-1 (CASP1) activation, which subsequently cleaves and activates inflammatory cytokines IL1B and IL18 and gasdermin-D (GSDMD), leading to pyroptosis. In the absence of GSDMD expression, the Nlrp1a inflammasome is able to recruit and activate CASP8, leading to activation of gasdermin-E (GSDME). In terms of biological role, constitutes the precursor of the Nlrp1a inflammasome, which mediates autoproteolytic processing within the FIIND domain to generate the N-terminal and C-terminal parts, which are associated non-covalently in absence of pathogens and other damage-associated signals. Regulatory part that prevents formation of the Nlrp1a inflammasome: in absence of pathogens and other damage-associated signals, interacts with the C-terminal part of Nlrp1a (NACHT, LRR and PYD domains-containing protein 1a, C-terminus), preventing activation of the Nlrp1a inflammasome. In response to pathogen-associated signals, this part is ubiquitinated by the N-end rule pathway and degraded by the proteasome, releasing the cleaved C-terminal part of the protein, which polymerizes and forms the Nlrp1a inflammasome. Its function is as follows. Constitutes the active part of the Nlrp1a inflammasome. In absence of pathogens and other damage-associated signals, interacts with the N-terminal part of Nlrp1a (NACHT, LRR and PYD domains-containing protein 1a, N-terminus), preventing activation of the Nlrp1a inflammasome. In response to pathogen-associated signals, the N-terminal part of Nlrp1a is degraded by the proteasome, releasing this form, which polymerizes to form the Nlrp1a inflammasome complex: the Nlrp1a inflammasome complex then directly recruits pro-caspase-1 (proCASP1) and promotes caspase-1 (CASP1) activation, leading to gasdermin-D (GSDMD) cleavage and subsequent pyroptosis. The polypeptide is NACHT, LRR and PYD domains-containing protein 1a allele 3 (Rattus norvegicus (Rat)).